A 333-amino-acid polypeptide reads, in one-letter code: 4-hydroxythreonine-4-phosphate dehydrogenase (333 aa).

Substrate-binding residues include His136 and Thr137. A divalent metal cation-binding residues include His166, His211, and His266. Positions 274, 283, and 292 each coordinate substrate.

This sequence belongs to the PdxA family. Homodimer. Zn(2+) is required as a cofactor. Requires Mg(2+) as cofactor. Co(2+) serves as cofactor.

Its subcellular location is the cytoplasm. The enzyme catalyses 4-(phosphooxy)-L-threonine + NAD(+) = 3-amino-2-oxopropyl phosphate + CO2 + NADH. Its pathway is cofactor biosynthesis; pyridoxine 5'-phosphate biosynthesis; pyridoxine 5'-phosphate from D-erythrose 4-phosphate: step 4/5. Functionally, catalyzes the NAD(P)-dependent oxidation of 4-(phosphooxy)-L-threonine (HTP) into 2-amino-3-oxo-4-(phosphooxy)butyric acid which spontaneously decarboxylates to form 3-amino-2-oxopropyl phosphate (AHAP). The protein is 4-hydroxythreonine-4-phosphate dehydrogenase of Acidithiobacillus ferrooxidans (strain ATCC 23270 / DSM 14882 / CIP 104768 / NCIMB 8455) (Ferrobacillus ferrooxidans (strain ATCC 23270)).